A 483-amino-acid chain; its full sequence is Probable Xaa-Pro aminopeptidase MCYG_06503 (483 aa).

Positions 233, 244, 409, and 453 each coordinate Mn(2+).

The protein belongs to the peptidase M24B family. It depends on Mn(2+) as a cofactor.

It catalyses the reaction Release of any N-terminal amino acid, including proline, that is linked to proline, even from a dipeptide or tripeptide.. Catalyzes the removal of a penultimate prolyl residue from the N-termini of peptides. The sequence is that of Probable Xaa-Pro aminopeptidase MCYG_06503 from Arthroderma otae (strain ATCC MYA-4605 / CBS 113480) (Microsporum canis).